Reading from the N-terminus, the 286-residue chain is B3 domain-containing protein REM11 (286 aa).

The TF-B3 1 DNA-binding region spans 1 to 70 (MAWNLAIITL…TPMLSLVSTQ (70 aa)). Residues 68–114 (STQSTSHKSQKRECSKHSEKESISAVPSKGKKNRKARSNREERRDSS) form a disordered region. A compositionally biased stretch (basic and acidic residues) spans 78-89 (KRECSKHSEKES). Positions 119–219 (NRFVTFTPED…RAQVCFYGVF (101 aa)) form a DNA-binding region, TF-B3 2.

It localises to the nucleus. The protein is B3 domain-containing protein REM11 (REM11) of Arabidopsis thaliana (Mouse-ear cress).